The following is a 144-amino-acid chain: Large ribosomal subunit protein uL13 (144 aa).

Belongs to the universal ribosomal protein uL13 family. Part of the 50S ribosomal subunit.

Functionally, this protein is one of the early assembly proteins of the 50S ribosomal subunit, although it is not seen to bind rRNA by itself. It is important during the early stages of 50S assembly. The chain is Large ribosomal subunit protein uL13 from Legionella pneumophila (strain Paris).